The primary structure comprises 71 residues: Small ribosomal subunit protein bS21B (71 aa).

This sequence belongs to the bacterial ribosomal protein bS21 family.

This is Small ribosomal subunit protein bS21B from Rhizobium johnstonii (strain DSM 114642 / LMG 32736 / 3841) (Rhizobium leguminosarum bv. viciae).